A 246-amino-acid polypeptide reads, in one-letter code: O-antigen export system ATP-binding protein RfbB (246 aa).

Residues 22–246 (SGIKDLVFHP…IIELYKQAMA (225 aa)) form the ABC transporter domain. 63-70 (GRNGAGKS) contributes to the ATP binding site.

The protein belongs to the ABC transporter superfamily.

It localises to the cell inner membrane. In terms of biological role, may form an ATP-driven O-antigen export apparatus, in association with RfbA. This chain is O-antigen export system ATP-binding protein RfbB (rfbB), found in Klebsiella pneumoniae.